The following is a 245-amino-acid chain: NADH-quinone oxidoreductase subunit C (245 aa).

The span at 1-10 shows a compositional bias: basic and acidic residues; that stretch reads MSAPQDRTDD. Disordered regions lie at residues 1–54 and 216–245; these read MSAP…GYGG and PQRK…RSYQ. The segment covering 11 to 28 has biased composition (low complexity); sequence GGVPVPVTPAGATGGAPA. The span at 39-54 shows a compositional bias: gly residues; the sequence is GMFGDQGTGDVSGYGG.

The protein belongs to the complex I 30 kDa subunit family. In terms of assembly, NDH-1 is composed of 14 different subunits. Subunits NuoB, C, D, E, F, and G constitute the peripheral sector of the complex.

The protein resides in the cell membrane. It carries out the reaction a quinone + NADH + 5 H(+)(in) = a quinol + NAD(+) + 4 H(+)(out). Its function is as follows. NDH-1 shuttles electrons from NADH, via FMN and iron-sulfur (Fe-S) centers, to quinones in the respiratory chain. The immediate electron acceptor for the enzyme in this species is believed to be a menaquinone. Couples the redox reaction to proton translocation (for every two electrons transferred, four hydrogen ions are translocated across the cytoplasmic membrane), and thus conserves the redox energy in a proton gradient. In Salinispora tropica (strain ATCC BAA-916 / DSM 44818 / JCM 13857 / NBRC 105044 / CNB-440), this protein is NADH-quinone oxidoreductase subunit C.